A 426-amino-acid polypeptide reads, in one-letter code: Histidine--tRNA ligase (426 aa).

The protein belongs to the class-II aminoacyl-tRNA synthetase family. As to quaternary structure, homodimer.

It is found in the cytoplasm. It catalyses the reaction tRNA(His) + L-histidine + ATP = L-histidyl-tRNA(His) + AMP + diphosphate + H(+). The sequence is that of Histidine--tRNA ligase from Prochlorococcus marinus (strain MIT 9301).